A 417-amino-acid polypeptide reads, in one-letter code: Serine hydroxymethyltransferase (417 aa).

(6S)-5,6,7,8-tetrahydrofolate contacts are provided by residues Leu-121 and 125 to 127 (GHL). Lys-229 is modified (N6-(pyridoxal phosphate)lysine). 355–357 (SPF) serves as a coordination point for (6S)-5,6,7,8-tetrahydrofolate.

This sequence belongs to the SHMT family. Homodimer. The cofactor is pyridoxal 5'-phosphate.

It is found in the cytoplasm. The catalysed reaction is (6R)-5,10-methylene-5,6,7,8-tetrahydrofolate + glycine + H2O = (6S)-5,6,7,8-tetrahydrofolate + L-serine. Its pathway is one-carbon metabolism; tetrahydrofolate interconversion. The protein operates within amino-acid biosynthesis; glycine biosynthesis; glycine from L-serine: step 1/1. Catalyzes the reversible interconversion of serine and glycine with tetrahydrofolate (THF) serving as the one-carbon carrier. This reaction serves as the major source of one-carbon groups required for the biosynthesis of purines, thymidylate, methionine, and other important biomolecules. Also exhibits THF-independent aldolase activity toward beta-hydroxyamino acids, producing glycine and aldehydes, via a retro-aldol mechanism. The chain is Serine hydroxymethyltransferase from Aeromonas hydrophila subsp. hydrophila (strain ATCC 7966 / DSM 30187 / BCRC 13018 / CCUG 14551 / JCM 1027 / KCTC 2358 / NCIMB 9240 / NCTC 8049).